Reading from the N-terminus, the 233-residue chain is ATP synthase subunit C lysine N-methyltransferase (233 aa).

Met-1 is subject to N-acetylmethionine. A helical membrane pass occupies residues 38-58; sequence FLLTGLVGGTLVAVYAVATPF. The segment at 56–90 is required for mitochondrial location; it reads TPFVTPALRKVCLPFVPATTKQIENVVKMLRCRRG.

The protein belongs to the ANT/ATPSC lysine N-methyltransferase family. In terms of tissue distribution, ubiquitously expressed.

It localises to the mitochondrion membrane. It carries out the reaction L-lysyl-[protein] + 3 S-adenosyl-L-methionine = N(6),N(6),N(6)-trimethyl-L-lysyl-[protein] + 3 S-adenosyl-L-homocysteine + 3 H(+). In terms of biological role, mitochondrial protein-lysine N-methyltransferase that trimethylates ATP synthase subunit C, ATP5MC1 and ATP5MC2. Trimethylation is required for proper incorporation of the C subunit into the ATP synthase complex and mitochondrial respiration. Promotes chronic pain. Involved in persistent inflammatory and neuropathic pain: methyltransferase activity in the mitochondria of sensory neurons promotes chronic pain via a pathway that depends on the production of reactive oxygen species (ROS) and on the engagement of spinal cord microglia. The chain is ATP synthase subunit C lysine N-methyltransferase from Homo sapiens (Human).